Consider the following 212-residue polypeptide: Peptide methionine sulfoxide reductase MsrA (212 aa).

Residues 1 to 14 show a composition bias toward polar residues; it reads MNSIDKTQRITQSD. A disordered region spans residues 1–21; that stretch reads MNSIDKTQRITQSDALPGRST. The active site involves cysteine 52.

This sequence belongs to the MsrA Met sulfoxide reductase family.

It carries out the reaction L-methionyl-[protein] + [thioredoxin]-disulfide + H2O = L-methionyl-(S)-S-oxide-[protein] + [thioredoxin]-dithiol. The catalysed reaction is [thioredoxin]-disulfide + L-methionine + H2O = L-methionine (S)-S-oxide + [thioredoxin]-dithiol. Has an important function as a repair enzyme for proteins that have been inactivated by oxidation. Catalyzes the reversible oxidation-reduction of methionine sulfoxide in proteins to methionine. The sequence is that of Peptide methionine sulfoxide reductase MsrA from Pectobacterium atrosepticum (strain SCRI 1043 / ATCC BAA-672) (Erwinia carotovora subsp. atroseptica).